Reading from the N-terminus, the 237-residue chain is Octanoyltransferase (237 aa).

Residues 27 to 210 enclose the BPL/LPL catalytic domain; sequence SGGDDILLLL…EFYHIFQPAG (184 aa). Residues 72–79, 139–141, and 152–154 each bind substrate; these read RGGNVTCH, SLG, and GMA. The active-site Acyl-thioester intermediate is the cysteine 170.

The protein belongs to the LipB family.

The protein resides in the cytoplasm. The enzyme catalyses octanoyl-[ACP] + L-lysyl-[protein] = N(6)-octanoyl-L-lysyl-[protein] + holo-[ACP] + H(+). It functions in the pathway protein modification; protein lipoylation via endogenous pathway; protein N(6)-(lipoyl)lysine from octanoyl-[acyl-carrier-protein]: step 1/2. Catalyzes the transfer of endogenously produced octanoic acid from octanoyl-acyl-carrier-protein onto the lipoyl domains of lipoate-dependent enzymes. Lipoyl-ACP can also act as a substrate although octanoyl-ACP is likely to be the physiological substrate. The polypeptide is Octanoyltransferase (Desulfovibrio desulfuricans (strain ATCC 27774 / DSM 6949 / MB)).